The following is a 245-amino-acid chain: Biosynthetic peptidoglycan transglycosylase (245 aa).

The chain crosses the membrane as a helical span at residues 20–42 (VYAGSVFAGAWLATQLFYLVQIA).

It belongs to the glycosyltransferase 51 family.

It is found in the cell inner membrane. The catalysed reaction is [GlcNAc-(1-&gt;4)-Mur2Ac(oyl-L-Ala-gamma-D-Glu-L-Lys-D-Ala-D-Ala)](n)-di-trans,octa-cis-undecaprenyl diphosphate + beta-D-GlcNAc-(1-&gt;4)-Mur2Ac(oyl-L-Ala-gamma-D-Glu-L-Lys-D-Ala-D-Ala)-di-trans,octa-cis-undecaprenyl diphosphate = [GlcNAc-(1-&gt;4)-Mur2Ac(oyl-L-Ala-gamma-D-Glu-L-Lys-D-Ala-D-Ala)](n+1)-di-trans,octa-cis-undecaprenyl diphosphate + di-trans,octa-cis-undecaprenyl diphosphate + H(+). Its pathway is cell wall biogenesis; peptidoglycan biosynthesis. Peptidoglycan polymerase that catalyzes glycan chain elongation from lipid-linked precursors. This chain is Biosynthetic peptidoglycan transglycosylase, found in Burkholderia ambifaria (strain MC40-6).